Here is a 383-residue protein sequence, read N- to C-terminus: Erythronate-4-phosphate dehydrogenase (383 aa).

2 residues coordinate substrate: Ser45 and Thr66. 2 residues coordinate NAD(+): Asp146 and Thr175. Arg208 is a catalytic residue. Asp232 is an NAD(+) binding site. Glu237 is an active-site residue. Residue His254 is the Proton donor of the active site. Gly257 is an NAD(+) binding site.

Belongs to the D-isomer specific 2-hydroxyacid dehydrogenase family. PdxB subfamily. Homodimer.

The protein localises to the cytoplasm. It catalyses the reaction 4-phospho-D-erythronate + NAD(+) = (R)-3-hydroxy-2-oxo-4-phosphooxybutanoate + NADH + H(+). It participates in cofactor biosynthesis; pyridoxine 5'-phosphate biosynthesis; pyridoxine 5'-phosphate from D-erythrose 4-phosphate: step 2/5. In terms of biological role, catalyzes the oxidation of erythronate-4-phosphate to 3-hydroxy-2-oxo-4-phosphonooxybutanoate. The sequence is that of Erythronate-4-phosphate dehydrogenase from Chromohalobacter salexigens (strain ATCC BAA-138 / DSM 3043 / CIP 106854 / NCIMB 13768 / 1H11).